Here is a 350-residue protein sequence, read N- to C-terminus: Protein TRIGALACTOSYLDIACYLGLYCEROL 1, chloroplastic (350 aa).

The interval 67-86 (SMSMLEEETSTENNAPSQEA) is disordered. The chain crosses the membrane as a helical span at residues 98–117 (YIWRGLSVPIIAGQVVLRIL). Residues 118–136 (KGKIHWRNTLQQLERTGPK) are Stromal-facing. A helical transmembrane segment spans residues 137 to 157 (SLGVCLLTSTFVGMAFTIQFV). Over 158–168 (REFTRLGLNRS) the chain is Chloroplast intermembrane. A helical transmembrane segment spans residues 169–189 (IGGVLALAFSRELSPVITSIV). Residues 190-229 (VAGRMGSAFAAELGTMQVSEQTDTLRVLGADPIDYLITPR) lie on the Stromal side of the membrane. Residues 230 to 250 (VIASCLALPFLTLMCFTVGMA) form a helical membrane-spanning segment. Topologically, residues 251-288 (SSALLSDAVYGISINIIMDSAHRALRPWDIVSAMIKSQ) are chloroplast intermembrane. A helical transmembrane segment spans residues 289–309 (VFGAIISVISCSWGVTTTGGA). The Stromal segment spans residues 310-318 (KGVGESTTS). The chain crosses the membrane as a helical span at residues 319–339 (AVVMSLVGIFIADFVLSSFFF). Over 340–350 (QGAGDSLKNCV) the chain is Chloroplast intermembrane.

Belongs to the MlaE permease family. As to quaternary structure, permease subunit of the TGD complex, a lipid translocator at the inner chloroplast envelope membrane made of TGD1, TGD2 and TGD3. Interacts with TGD2 and TGD3 with an overall subunit stoichiometry of 2 TGD1, 2 TGD3 and 8 to 12 TGD2. Interacts with TGD5. High levels in green tissues, but low levels in nongreen tissues such as roots.

The protein localises to the plastid. It is found in the chloroplast inner membrane. Its function is as follows. Required during embryogenesis. Permease involved in lipid transfer from the endoplasmic reticulum (ER) to plastids, and necessary for thylakoids formation. This chain is Protein TRIGALACTOSYLDIACYLGLYCEROL 1, chloroplastic, found in Arabidopsis thaliana (Mouse-ear cress).